Reading from the N-terminus, the 203-residue chain is Probable cytochrome c oxidase subunit 3 (203 aa).

Transmembrane regions (helical) follow at residues 30–50, 69–89, 102–122, 142–162, and 179–199; these read IIWLSSELMFFAGLFAMYFVA, LAVPVTAVLVASSFTCQMGVF, WYFITLLMGAFFVAGQGYEYY, ITTGFHGLHVIGGLIAFVFLL, and IVVSYYWHFVDIVWIGLFATI.

The protein belongs to the cytochrome c oxidase subunit 3 family.

Its subcellular location is the cell membrane. It carries out the reaction 4 Fe(II)-[cytochrome c] + O2 + 8 H(+)(in) = 4 Fe(III)-[cytochrome c] + 2 H2O + 4 H(+)(out). This is Probable cytochrome c oxidase subunit 3 (ctaE) from Nocardia farcinica (strain IFM 10152).